The following is a 1211-amino-acid chain: Sterol 3-beta-glucosyltransferase (1211 aa).

The span at 1–10 (MSQLRPRDSS) shows a compositional bias: basic and acidic residues. The interval 1–61 (MSQLRPRDSS…DETEAEDDID (61 aa)) is disordered. Residues 196–235 (EKLKTTFDLSDDDEFVNDYPCWLLHEVFLQGHIYITSRYL) form the GRAM 1 domain. A PH domain is found at 248–347 (VTMSGALSIR…WVTDLRKHIF (100 aa)). 2 disordered regions span residues 422–452 (LTDS…KLSR) and 500–531 (VVPN…PSNW). Residues 423–432 (TDSDSSESDS) show a composition bias toward acidic residues. A compositionally biased stretch (basic and acidic residues) spans 507 to 525 (SELKQDHAGDAPKDSEEPS). In terms of domain architecture, GRAM 2 spans 586–652 (SRFRKHFSLP…SDIENVYNLK (67 aa)). 13 residues coordinate UDP-alpha-D-glucose: Ser-770, Arg-771, Asp-773, Asn-1046, Asn-1072, Val-1073, His-1075, His-1088, Ser-1091, Gly-1092, Thr-1093, Asp-1112, and Gln-1113.

This sequence belongs to the glycosyltransferase 28 family.

The protein localises to the cytoplasm. Its subcellular location is the preautophagosomal structure membrane. It catalyses the reaction a sterol + UDP-alpha-D-glucose = a sterol 3-beta-D-glucoside + UDP + H(+). It carries out the reaction ergosterol + UDP-alpha-D-glucose = ergosteryl 3-beta-D-glucoside + UDP + H(+). In terms of biological role, sterol glycosyltransferase responsible for the glycosylation of ergosterol to form ergosterol-glucoside. Shows also activity in vitro on other sterols such as cholesterol, beta-sitosterol, stigmasterol and tomatidine. Probable sterol 3-beta-glucosyltransferase that mediates autophagic degradation of peroxisomes (pexophagy). The protein is Sterol 3-beta-glucosyltransferase of Komagataella phaffii (strain GS115 / ATCC 20864) (Yeast).